Consider the following 607-residue polypeptide: MTQTFDPGAFLATCSGRPGVYRMFDAEATLLYVGKAKNLKKRLASYFRKTGHAPKTGALVSRIAQIETTITGNETEALLLEQTLIKEWRPPYNILLRDDKSYPYVFLSDNAFPRLSIHRGTKKAKGRYFGPYPSAGAIRESLSLLQKTFQVRQCEDSYFKNRTRPCLQYQIKRCKGPCVGLVEPEVYAEDVRHSVMFLEGRSNALSDELNASMEKAAMALDFERAAELRDQVALLRRVQDQQSMDGGTGDVDVVAAFVNPGGACVHLISVRGGRVLGSKNFFPQVGIEEEVGEVMSAFLAQYFLGGIDRELPGEVIVNVINDDFPAFVDAVEELRGVEMVISHRVRGTRARWQQMAVTNAEQALTARLANRQHVASRFEALAKVLGLEDPPMRLECYDISHSSGEATVASCVVFGPEGPIKSDYRRFNIEGVTAGDDYAAMHQALTRRYSRIKAGEGKLPDVLLVDGGKGQMSMARDVLNELQVPELILLGVAKGTTRKAGFETLYLNDSAHEFTLPGDSPALHLIQQIRDEAHRFAITGHRARRGKTRRTSTLEGVAGVGPTRRRDLLKHFGGLQELSRASIDEIAKAPGISKKLAESIYANLHSE.

In terms of domain architecture, GIY-YIG spans 16 to 94; sequence GRPGVYRMFD…IKEWRPPYNI (79 aa). A UVR domain is found at 203–238; the sequence is NALSDELNASMEKAAMALDFERAAELRDQVALLRRV.

It belongs to the UvrC family. As to quaternary structure, interacts with UvrB in an incision complex.

The protein localises to the cytoplasm. In terms of biological role, the UvrABC repair system catalyzes the recognition and processing of DNA lesions. UvrC both incises the 5' and 3' sides of the lesion. The N-terminal half is responsible for the 3' incision and the C-terminal half is responsible for the 5' incision. In Pseudomonas syringae pv. syringae (strain B728a), this protein is UvrABC system protein C.